The sequence spans 279 residues: 3-methyl-2-oxobutanoate hydroxymethyltransferase (279 aa).

Positions 44 and 83 each coordinate Mg(2+). 3-methyl-2-oxobutanoate is bound by residues Asp44–Ser45, Asp83, and Lys113. Glu115 contributes to the Mg(2+) binding site. Glu182 functions as the Proton acceptor in the catalytic mechanism.

The protein belongs to the PanB family. In terms of assembly, homodecamer; pentamer of dimers. The cofactor is Mg(2+).

The protein localises to the cytoplasm. It carries out the reaction 3-methyl-2-oxobutanoate + (6R)-5,10-methylene-5,6,7,8-tetrahydrofolate + H2O = 2-dehydropantoate + (6S)-5,6,7,8-tetrahydrofolate. It participates in cofactor biosynthesis; (R)-pantothenate biosynthesis; (R)-pantoate from 3-methyl-2-oxobutanoate: step 1/2. Functionally, catalyzes the reversible reaction in which hydroxymethyl group from 5,10-methylenetetrahydrofolate is transferred onto alpha-ketoisovalerate to form ketopantoate. This is 3-methyl-2-oxobutanoate hydroxymethyltransferase from Dehalococcoides mccartyi (strain CBDB1).